Consider the following 190-residue polypeptide: UPF0301 protein PSPTO_5037 (190 aa).

The protein belongs to the UPF0301 (AlgH) family.

This is UPF0301 protein PSPTO_5037 from Pseudomonas syringae pv. tomato (strain ATCC BAA-871 / DC3000).